Consider the following 1313-residue polypeptide: Histone-lysine N-methyltransferase, H3 lysine-4 specific (1313 aa).

Disordered stretches follow at residues 1-205, 400-458, 555-607, 667-792, 842-908, and 932-982; these read MSRS…DPSR, KKSR…KPRH, GKSS…AKNL, IVFD…AGED, ELPS…SKKQ, and AGIE…DPEL. Residues 7–18 are compositionally biased toward low complexity; sequence ASFAQFFPAAPR. The span at 19–31 shows a compositional bias: basic and acidic residues; it reads AARDRATERERAR. Over residues 70–80 the composition is skewed to polar residues; sequence HITSLNHSSSA. A compositionally biased stretch (low complexity) spans 105–121; sequence SASSHTSTSSSIFSSST. 2 stretches are compositionally biased toward polar residues: residues 130–158 and 174–186; these read SVRN…STSL and NGLT…SATD. Positions 194–204 are enriched in basic and acidic residues; sequence GTERVPPRDPS. Residues 559–607 show a composition bias toward basic and acidic residues; sequence RSSEDHRRHSYGSEKRPPPEHRQRDDQDRRRRDEEADIEEEKKQRAKNL. Basic residues predominate over residues 702–716; the sequence is RVRKLKSRGVNARKH. Residues 758–784 show a composition bias toward basic and acidic residues; it reads MIRDTEEPESRPRSRVSSEEDRNKEET. A compositionally biased stretch (polar residues) spans 843–855; the sequence is LPSQEQAVESVTP. Residues 868–884 show a composition bias toward basic and acidic residues; sequence ADVKAEPAEDKETEDSR. Over residues 895–907 the composition is skewed to basic residues; the sequence is PKKKAKAKKKSKK. Basic and acidic residues predominate over residues 960–978; it reads LETKGEALEAPETESKPDL. The short motif at 1137 to 1142 is the RxxxRR motif element; sequence RVNNRR. In terms of domain architecture, SET spans 1171–1288; it reads KPVKFARSAI…QNEELTYDYK (118 aa). Y1287 is an S-adenosyl-L-methionine binding site. Positions 1297 to 1313 constitute a Post-SET domain; that stretch reads DRIPCLCGTAACKGFLN.

Belongs to the class V-like SAM-binding methyltransferase superfamily. Component of the Set1C/COMPASS complex.

It localises to the nucleus. Its subcellular location is the chromosome. The catalysed reaction is L-lysyl(4)-[histone H3] + 3 S-adenosyl-L-methionine = N(6),N(6),N(6)-trimethyl-L-lysyl(4)-[histone H3] + 3 S-adenosyl-L-homocysteine + 3 H(+). It catalyses the reaction N(6)-methyl-L-lysyl(4)-[histone H3] + S-adenosyl-L-methionine = N(6),N(6)-dimethyl-L-lysyl(4)-[histone H3] + S-adenosyl-L-homocysteine + H(+). The enzyme catalyses N(6),N(6)-dimethyl-L-lysyl(4)-[histone H3] + S-adenosyl-L-methionine = N(6),N(6),N(6)-trimethyl-L-lysyl(4)-[histone H3] + S-adenosyl-L-homocysteine + H(+). Catalytic component of the COMPASS (Set1C) complex that specifically mono-, di- and trimethylates histone H3 to form H3K4me1/2/3. Binds RNAs which might negatively affect its histone methyltransferase activity. COMPASS recognizes ubiquitinated H2B on one face of the nucleosome which stimulates the methylation of H3 on the opposing face. The sequence is that of Histone-lysine N-methyltransferase, H3 lysine-4 specific (set-1) from Neurospora crassa (strain ATCC 24698 / 74-OR23-1A / CBS 708.71 / DSM 1257 / FGSC 987).